Consider the following 318-residue polypeptide: MSKSFILSTGSYLPKKILSNNEIALIVETNDEWIRQRTGIVQRHIADEGELTSDLAVNAAKNAIEKAKISIDEIGLIIVATTTPDKTLPSCATIVQSKLKCKNAFSFDVQAACSGFIYAVTVADSLIKSHNRIKYALVIGAEIMSRIVDWEDRSTCVLFGDSAGAVIIKSEMGSSGIISTNLHSDGNVDILCTNGGVSSTRDSGKILMNGREVFKHAVDKLTASVEETLKCNNLKIIDIDWLIPHQANIRIIEAVVKKLDFPIEKVINTVDKHANTSAASIPLALDYAIQESKIKSGNLVLLISIGAGLTWGSVLLRY.

Residues C113 and H245 contribute to the active site. Residues 246 to 250 (QANIR) are ACP-binding. N275 is a catalytic residue.

This sequence belongs to the thiolase-like superfamily. FabH family. In terms of assembly, homodimer.

It localises to the cytoplasm. It catalyses the reaction malonyl-[ACP] + acetyl-CoA + H(+) = 3-oxobutanoyl-[ACP] + CO2 + CoA. It participates in lipid metabolism; fatty acid biosynthesis. Its function is as follows. Catalyzes the condensation reaction of fatty acid synthesis by the addition to an acyl acceptor of two carbons from malonyl-ACP. Catalyzes the first condensation reaction which initiates fatty acid synthesis and may therefore play a role in governing the total rate of fatty acid production. Possesses both acetoacetyl-ACP synthase and acetyl transacylase activities. Its substrate specificity determines the biosynthesis of branched-chain and/or straight-chain of fatty acids. The protein is Beta-ketoacyl-[acyl-carrier-protein] synthase III of Wolbachia pipientis subsp. Culex pipiens (strain wPip).